We begin with the raw amino-acid sequence, 65 residues long: Small ribosomal subunit protein eS17 (65 aa).

Belongs to the eukaryotic ribosomal protein eS17 family.

This Methanocella arvoryzae (strain DSM 22066 / NBRC 105507 / MRE50) protein is Small ribosomal subunit protein eS17.